The chain runs to 514 residues: Major facilitator superfamily domain-containing protein 4A (514 aa).

The next 5 helical transmembrane spans lie at 19–39 (LTYWSVFFSFGLCIAFLGPTL), 53–73 (ISWVFFSQQLCLLLGSALGGV), 82–102 (LWALFTSSLAISLVFAVIPFC), 107–127 (VLASVMALAGLAMGCIDTVAN), and 139–159 (AVFLQVLHFFVGFGALLSPLI). An N-linked (GlcNAc...) asparagine glycan is attached at N177. The next 7 membrane-spanning stretches (helical) occupy residues 221-241 (YAFWIMALINLPVPMAVLMLL), 307-327 (FFAIHITGALVLFMTDGLTGA), 347-367 (VAGYLPSLFWGFITLGRLLSI), 376-396 (ATMVFINVVGVVVTFLVLLIF), 400-420 (VVFLFVGTASLGLFLSSTFPS), 438-458 (VLVTGAGVGEMVLQMLVGSIF), and 466-486 (FLVCGVIFGCLAFTFYILLLF).

This sequence belongs to the major facilitator superfamily.

The protein localises to the membrane. The polypeptide is Major facilitator superfamily domain-containing protein 4A (Homo sapiens (Human)).